The chain runs to 126 residues: Large ribosomal subunit protein bL17 (126 aa).

This sequence belongs to the bacterial ribosomal protein bL17 family. Part of the 50S ribosomal subunit. Contacts protein L32.

This Vibrio atlanticus (strain LGP32) (Vibrio splendidus (strain Mel32)) protein is Large ribosomal subunit protein bL17.